The following is a 156-amino-acid chain: Transcription antitermination protein NusB (156 aa).

The protein belongs to the NusB family.

Involved in transcription antitermination. Required for transcription of ribosomal RNA (rRNA) genes. Binds specifically to the boxA antiterminator sequence of the ribosomal RNA (rrn) operons. The chain is Transcription antitermination protein NusB from Rickettsia bellii (strain OSU 85-389).